The following is a 954-amino-acid chain: MMRLSSTLRRFRWAVFATWLLLLVPSIYLALNQSSNLTGGGFEVEGSQSLHVQRQLEEHFPDQGASPLALVAAPRADASYEDMNAAVVHLEKLAAEVPSVKIVPNPQQPAPQPDRPYVITLQLDFNNTGAVDVAKQLRQKVGIHGEEPGESQNGKVKFYVIGQGALGAAATQATKHDIAAAEKWNMPIVLIVLLAVFGSLAAAALPLVLGVCTVVVTMGLVYLLSMFTTMSVFVTSTVSMFGIAVAIDYSLFILMRFREELRAGRDQQDAIDAAMATSGLAVALSGLTVIASVTGIYLINTPVLVSMATGAILAVAVAVLTSTTLTPAVLATFGKAAAKRSSYLHWSRRAEAAQSRFWTRWTGAVMRRPWASAIAAAILLLVLAAPAFNMVLGNSMQRQFDPTHEIRGGVNAAADALGPGALGPIRVLVTFPGEGDASSQAATTTIEAVRQQMTKAPSVVSVQPPVVSDDNDSALLSAVLSVDPEDMAAREAIDWMRAELPGVAGQNATIDVGGPTALIKDFDDRVSATQPLVFVFVALIAFVMLLVSIRSVVLAFKGVLMTVLSVAAAYGSLVVVFQWGWLEQLGFPRISSLDSTIPPLVLAMTFGLSMDYEIFLLTRIRERFLQTNSTRDAVAYGVSTSARTITSAALIMIAVFIGFAFAGMPLVAQLGVACAVAIAVDATVVRLVLVPALMAMFDQWNWWLPRWLDKILPEVDFEKPLPKIEVTDLVIIPDNIAALGPSGSDLRTMVRTAARMKTLAPQTISVADPLAFSGCTRPTTRLSTQRAGRPKAHTPGLHPVTMWRGRLSVAVDALQTEADTEQAPVERRGPVETTNVQLPTGDRLQIPTGAETLRLAGYLIMCRNTTKDFEDFARLVDLMDSHTAALVLASMDRYYCGRDPSNRWVATQLVRRLADPQPSDEHDVRMSGPDAAEDWEKVRQRCLSVAVAMLEEAK.

Helical transmembrane passes span 11–31 (FRWA…YLAL), 188–208 (IVLI…LPLV), 214–234 (VVVT…SVFV), 235–255 (TSTV…FILM), 279–299 (GLAV…IYLI), 312–334 (ILAV…ATFG), 373–393 (AIAA…MVLG), 529–549 (TQPL…LVSI), 559–579 (VLMT…VFQW), 597–617 (IPPL…IFLL), 648–668 (AALI…PLVA), and 670–690 (LGVA…LVLV).

It localises to the cell inner membrane. Contributes to cell wall biosynthesis and biofilm formation. Transports the mycolic acid-containing lipids monomeromycolyl diacylglycerol (MMDAG) and mycolate ester wax (WE) to the bacterial surface. The polypeptide is Mycolic acid-containing lipids exporter MmpL11 (Mycolicibacterium smegmatis (strain ATCC 700084 / mc(2)155) (Mycobacterium smegmatis)).